We begin with the raw amino-acid sequence, 614 residues long: Zinc finger and SCAN domain-containing protein 2 (614 aa).

2 disordered regions span residues 1–26 and 43–76; these read MMAADIPRVTTPLSSLVQVPQEEDRQ and EAVLQEDGPESEPFPQSAGKGGPQEEVTRGPQGA. Residues 59-132 enclose the SCAN box domain; sequence SAGKGGPQEE…ALVEDLTQTL (74 aa). 14 consecutive C2H2-type zinc fingers follow at residues 222–244, 250–272, 278–300, 306–328, 334–356, 362–384, 390–412, 418–440, 446–468, 474–496, 502–524, 530–552, 558–580, and 586–608; these read YECPQCGKTFSRKSHLITHERTH, YKCDECGKSFSDGSNFSRHQTTH, YKCRDCGKSFSRSANLITHQRIH, FQCAECGKSFSRSPNLIAHQRTH, YSCPECGKSFGNRSSLNTHQGIH, YECKECGESFSYNSNLIRHQRIH, YKCTDCGQRFSQSSALITHRRTH, YQCSECGKSFSRSSNLATHRRTH, YKCGVCGKSFSQSSSLIAHQGMH, YECLTCGESFSWSSNLLKHQRIH, YKCSECGKCFSQRSQLVVHQRTH, YKCLMCGKSFSRGSILVMHQRAH, YRCPECGKGFSWNSVLIIHQRIH, and YKCPECGKGFSNSSNFITHQRTH.

The protein belongs to the krueppel C2H2-type zinc-finger protein family.

The protein localises to the nucleus. In terms of biological role, may be involved in transcriptional regulation during the post-meiotic stages of spermatogenesis. The protein is Zinc finger and SCAN domain-containing protein 2 (ZSCAN2) of Homo sapiens (Human).